The sequence spans 489 residues: ATP synthase subunit beta 1 (489 aa).

An ATP-binding site is contributed by 159–166 (GGAGVGKT). Over residues 465-477 (EKSKKAAEDKPKA) the composition is skewed to basic and acidic residues. Positions 465–489 (EKSKKAAEDKPKAEEDEDATSLHDA) are disordered.

The protein belongs to the ATPase alpha/beta chains family. F-type ATPases have 2 components, CF(1) - the catalytic core - and CF(0) - the membrane proton channel. CF(1) has five subunits: alpha(3), beta(3), gamma(1), delta(1), epsilon(1). CF(0) has three main subunits: a(1), b(2) and c(9-12). The alpha and beta chains form an alternating ring which encloses part of the gamma chain. CF(1) is attached to CF(0) by a central stalk formed by the gamma and epsilon chains, while a peripheral stalk is formed by the delta and b chains.

The protein localises to the cell inner membrane. The catalysed reaction is ATP + H2O + 4 H(+)(in) = ADP + phosphate + 5 H(+)(out). In terms of biological role, produces ATP from ADP in the presence of a proton gradient across the membrane. The catalytic sites are hosted primarily by the beta subunits. The protein is ATP synthase subunit beta 1 of Marinomonas sp. (strain MWYL1).